A 1022-amino-acid polypeptide reads, in one-letter code: D-2-hydroxyglutarate dehydrogenase (1022 aa).

In terms of domain architecture, FAD-binding PCMH-type spans Tyr53–Leu286. Arg407 and His505 together coordinate (R)-2-hydroxyglutarate. Positions Phe667 to Arg700 constitute a 4Fe-4S ferredoxin-type domain. Positions 678, 681, 684, and 688 each coordinate [4Fe-4S] cluster.

This sequence in the N-terminal section; belongs to the FAD-binding oxidoreductase/transferase type 4 family. Homotetramer. [4Fe-4S] cluster serves as cofactor. FAD is required as a cofactor.

It catalyses the reaction (R)-2-hydroxyglutarate + A = 2-oxoglutarate + AH2. With respect to regulation, activity is completely inhibited by the addition of 0.5 mM Mn(2+), Ni(2+), or Co(2+) and partially inhibited by 0.5 mM Zn(2+). Its function is as follows. Catalyzes the oxidation of D-2-hydroxyglutarate (D-2-HGA) to 2-oxoglutarate. Appears to be the only D2HGDH in P.ananatis, providing the way to recycle D-2-HGA produced during L-serine synthesis by SerA, by converting it back to 2-oxoglutarate. Is involved in the utilization of D-2-HGA, that can support the growth of P.ananatis as a sole carbon source, although it barely serves as a good substrate. The physiological molecule that functions as the primary electron acceptor during D-2-HGA oxidation by YdiJ in P.ananatis is unknown. Shows strict substrate specificity towards D-2-HGA, since it has no detectable activity on L-2-hydroxyglutarate, L-malate, D-malate, L-lactate, D-lactate, L-tartrate, D-tartrate, L-glycerate, D-glycerate, glutarate, or pyruvate. The polypeptide is D-2-hydroxyglutarate dehydrogenase (Pantoea ananatis (strain AJ13355)).